Reading from the N-terminus, the 294-residue chain is Transcription termination/antitermination protein NusG (294 aa).

Residues 1 to 91 are disordered; it reads MSDPNLNDAV…EEAEPAAPVD (91 aa). The span at 25-39 shows a compositional bias: acidic residues; sequence DIVEAADSVDPDQAE. A compositionally biased stretch (low complexity) spans 40 to 53; that stretch reads AADLAAGEPAERAA. A compositionally biased stretch (acidic residues) spans 59 to 85; sequence DDSDEDDAAAEEAVEADDESADEEEAE.

It belongs to the NusG family.

In terms of biological role, participates in transcription elongation, termination and antitermination. The polypeptide is Transcription termination/antitermination protein NusG (Streptomyces griseus).